A 173-amino-acid polypeptide reads, in one-letter code: 3-isopropylmalate dehydratase small subunit (173 aa).

The protein belongs to the LeuD family. LeuD type 2 subfamily. Heterodimer of LeuC and LeuD.

It carries out the reaction (2R,3S)-3-isopropylmalate = (2S)-2-isopropylmalate. It functions in the pathway amino-acid biosynthesis; L-leucine biosynthesis; L-leucine from 3-methyl-2-oxobutanoate: step 2/4. Catalyzes the isomerization between 2-isopropylmalate and 3-isopropylmalate, via the formation of 2-isopropylmaleate. The sequence is that of 3-isopropylmalate dehydratase small subunit from Caldicellulosiruptor saccharolyticus (strain ATCC 43494 / DSM 8903 / Tp8T 6331).